Here is a 186-residue protein sequence, read N- to C-terminus: PR-toxin biosynthesis cluster protein 7 (186 aa).

The helical transmembrane segment at 24-43 (LGEVTTGGVTPRGTFIFCPI) threads the bilayer.

It is found in the membrane. It participates in sesquiterpene biosynthesis. Functionally, part of the gene cluster that mediates the biosynthesis of PR-toxin, a bicyclic sesquiterpene belonging to the eremophilane class and acting as a mycotoxin. The first step of the pathway is catalyzed by the aristolochene synthase which performs the cyclization of trans,trans-farnesyl diphosphate (FPP) to the bicyclic sesquiterpene aristolochene. Following the formation of aristolochene, the non-oxygenated aristolochene is converted to the trioxygenated intermediate eremofortin B, via 7-epi-neopetasone. This conversion appears to involve three enzymes, a hydroxysterol oxidase-like enzyme, the quinone-oxidase prx3 that forms the quinone-type-structure in the bicyclic nucleus of aristolochene with the C8-oxo group and the C-3 hydroxyl group, and the P450 monooxygenase ORF6 that introduces the epoxide at the double bond between carbons 1 and 2. No monoxy or dioxy-intermediates have been reported to be released to the broth, so these three early oxidative reactions may be coupled together. Eremofortin B is further oxidized by another P450 monooxygenase, that introduces a second epoxide between carbons 7 and 11 prior to acetylation to eremofortin A by the acetyltransferase ORF8. The second epoxidation may be performed by a second P450 monooxygenase. After the acetylation step, eremofortin A is converted to eremofortin C and then to PR-toxin. First the conversion of eremofortin A to eremofortin C proceeds by oxidation of the side chain of the molecule at C-12 and is catalyzed by the short-chain oxidoreductase prx1. The cytochrome P450 monooxygenase ORF6 is probably also involved in this step. The primary alcohol formed at C-12 is finally oxidized by the short-chain alcohol dehydrogenase prx4 that forms PR-toxin. This is PR-toxin biosynthesis cluster protein 7 from Penicillium roqueforti (strain FM164).